The chain runs to 478 residues: Glucose-6-phosphate 1-dehydrogenase (478 aa).

Residues R48, 86-87, and K142 contribute to the NADP(+) site; that span reads DF. Substrate contacts are provided by H172, K176, E210, and D229. Catalysis depends on H234, which acts as the Proton acceptor. The substrate site is built by K334 and K339.

The protein belongs to the glucose-6-phosphate dehydrogenase family.

The catalysed reaction is D-glucose 6-phosphate + NADP(+) = 6-phospho-D-glucono-1,5-lactone + NADPH + H(+). Its pathway is carbohydrate degradation; pentose phosphate pathway; D-ribulose 5-phosphate from D-glucose 6-phosphate (oxidative stage): step 1/3. Its function is as follows. Catalyzes the oxidation of glucose 6-phosphate to 6-phosphogluconolactone. The chain is Glucose-6-phosphate 1-dehydrogenase from Borreliella burgdorferi (strain ATCC 35210 / DSM 4680 / CIP 102532 / B31) (Borrelia burgdorferi).